Consider the following 95-residue polypeptide: Protein TusB (95 aa).

It belongs to the DsrH/TusB family. As to quaternary structure, heterohexamer, formed by a dimer of trimers. The hexameric TusBCD complex contains 2 copies each of TusB, TusC and TusD. The TusBCD complex interacts with TusE.

Its subcellular location is the cytoplasm. Part of a sulfur-relay system required for 2-thiolation of 5-methylaminomethyl-2-thiouridine (mnm(5)s(2)U) at tRNA wobble positions. The chain is Protein TusB from Salmonella arizonae (strain ATCC BAA-731 / CDC346-86 / RSK2980).